The following is an 85-amino-acid chain: Elongation factor 1-beta (85 aa).

This sequence belongs to the EF-1-beta/EF-1-delta family.

Its function is as follows. Promotes the exchange of GDP for GTP in EF-1-alpha/GDP, thus allowing the regeneration of EF-1-alpha/GTP that could then be used to form the ternary complex EF-1-alpha/GTP/AAtRNA. The protein is Elongation factor 1-beta of Methanosphaerula palustris (strain ATCC BAA-1556 / DSM 19958 / E1-9c).